The primary structure comprises 258 residues: Imidazole glycerol phosphate synthase subunit HisF (258 aa).

Catalysis depends on residues aspartate 11 and aspartate 130.

It belongs to the HisA/HisF family. As to quaternary structure, heterodimer of HisH and HisF.

It is found in the cytoplasm. The catalysed reaction is 5-[(5-phospho-1-deoxy-D-ribulos-1-ylimino)methylamino]-1-(5-phospho-beta-D-ribosyl)imidazole-4-carboxamide + L-glutamine = D-erythro-1-(imidazol-4-yl)glycerol 3-phosphate + 5-amino-1-(5-phospho-beta-D-ribosyl)imidazole-4-carboxamide + L-glutamate + H(+). Its pathway is amino-acid biosynthesis; L-histidine biosynthesis; L-histidine from 5-phospho-alpha-D-ribose 1-diphosphate: step 5/9. Functionally, IGPS catalyzes the conversion of PRFAR and glutamine to IGP, AICAR and glutamate. The HisF subunit catalyzes the cyclization activity that produces IGP and AICAR from PRFAR using the ammonia provided by the HisH subunit. The chain is Imidazole glycerol phosphate synthase subunit HisF from Salmonella arizonae (strain ATCC BAA-731 / CDC346-86 / RSK2980).